A 150-amino-acid polypeptide reads, in one-letter code: 3-dehydroquinate dehydratase (150 aa).

The active-site Proton acceptor is Tyr26. Substrate is bound by residues Asn77, His83, and Asp90. His103 functions as the Proton donor in the catalytic mechanism. Residues 104–105 and Arg114 each bind substrate; that span reads LS.

This sequence belongs to the type-II 3-dehydroquinase family. Homododecamer.

It catalyses the reaction 3-dehydroquinate = 3-dehydroshikimate + H2O. Its pathway is metabolic intermediate biosynthesis; chorismate biosynthesis; chorismate from D-erythrose 4-phosphate and phosphoenolpyruvate: step 3/7. Catalyzes a trans-dehydration via an enolate intermediate. In Photorhabdus laumondii subsp. laumondii (strain DSM 15139 / CIP 105565 / TT01) (Photorhabdus luminescens subsp. laumondii), this protein is 3-dehydroquinate dehydratase.